A 733-amino-acid chain; its full sequence is Zinc finger protein indra (733 aa).

The ZAD domain maps to 17 to 91; the sequence is VRCDHCGTSQ…RETVDRVQEQ (75 aa). Residues cysteine 19, cysteine 22, cysteine 64, and cysteine 67 each contribute to the Zn(2+) site. A compositionally biased stretch (basic and acidic residues) spans 90-100; that stretch reads EQPAKKTKVAE. The segment at 90–121 is disordered; sequence EQPAKKTKVAEIEEPSTQESDKKAVKVPKKNT. 3 positions are modified to phosphoserine: serine 109, serine 153, and serine 176. Phosphothreonine occurs at positions 180 and 188. 2 consecutive C2H2-type zinc fingers follow at residues 228–251 and 259–282; these read FQCP…QKEH and YPCT…RDTH. Residues 285–316 show a composition bias toward basic and acidic residues; it reads TFESEAKTKAKESKEKEAKSGAKNKIDAKAKE. A disordered region spans residues 285–336; sequence TFESEAKTKAKESKEKEAKSGAKNKIDAKAKETNAVSQRKKPKEKKSKEKKT. 2 C2H2-type zinc fingers span residues 416 to 439 and 447 to 469; these read FQCE…KTVH and FKCH…MTLH. Disordered stretches follow at residues 499–525 and 540–622; these read IENT…FTNR and AFKT…SSDV. Polar residues predominate over residues 592 to 602; that stretch reads SVSTTNGNSPA. 3 positions are modified to phosphoserine: serine 600, serine 642, and serine 646. Threonine 647 is modified (phosphothreonine). C2H2-type zinc fingers lie at residues 653–676 and 708–733; these read LSCD…EKKH and LPCG…RKRH. Phosphoserine is present on serine 654.

The protein belongs to the krueppel C2H2-type zinc-finger protein family.

The protein localises to the nucleus. It localises to the nucleolus. In terms of biological role, required for rDNA copy number maintenance and non-random sister chromatid segregation (NRSS) following unequal sister chromatid exchange. Binds ribosomal DNA (rDNA) preferentially binding to intergenic spacers (IGS) regions on both X and Y chromosomes. Essential for NRSS, a mechanism which contributes to the recovery and maintenance of inherently unstable rDNA copy numbers so that the integrity of the germline genome is upheld over generations and germline immortality is sustained. May be involved in transcriptional regulation. The protein is Zinc finger protein indra of Drosophila melanogaster (Fruit fly).